The chain runs to 1914 residues: Zinc finger protein Rlf (1914 aa).

Ser-41 bears the Phosphoserine mark. Residues 521-540 are compositionally biased toward basic and acidic residues; it reads KQYRRRDLTDQHKEKRDKKP. Positions 521–541 are disordered; sequence KQYRRRDLTDQHKEKRDKKPI. A C2H2-type 1 zinc finger spans residues 582 to 604; sequence YTCPVCIKKFKRKEMFVPHVMEH. Residue Lys-622 forms a Glycyl lysine isopeptide (Lys-Gly) (interchain with G-Cter in SUMO2) linkage. Ser-632 and Ser-634 each carry phosphoserine. C2H2-type zinc fingers lie at residues 671 to 696, 714 to 736, 742 to 766, 771 to 795, and 801 to 825; these read YPCP…KAEH, EKCT…EQVH, YMCV…KQKH, YKCE…EAQH, and YTCN…LSMH. Lys-839 participates in a covalent cross-link: Glycyl lysine isopeptide (Lys-Gly) (interchain with G-Cter in SUMO2). Residues 882 to 907 are disordered; that stretch reads TETAENLKENSDSNSSDQLSHSSSAS. The segment covering 893–907 has biased composition (low complexity); that stretch reads DSNSSDQLSHSSSAS. A C2H2-type 7 zinc finger spans residues 954-979; sequence FTCGFDGCGSTYKNARGMQKHLRKVH. Positions 993–1028 are disordered; the sequence is LFPSLGNEHNQTTEKLDAEPKPCSDTNSDSPDEGLD. The span at 1003–1014 shows a compositional bias: basic and acidic residues; that stretch reads QTTEKLDAEPKP. C2H2-type zinc fingers lie at residues 1127-1152 and 1172-1195; these read FFCE…LKKH and FQCH…KNKH. The tract at residues 1231-1290 is disordered; it reads LGGDPSSNSEKPHCHPKKDECSSETDLESSCEETESKTSDISSPIGSHREEQEGREGRGS. A compositionally biased stretch (basic and acidic residues) spans 1240–1251; that stretch reads EKPHCHPKKDEC. The segment covering 1252–1263 has biased composition (acidic residues); the sequence is SSETDLESSCEE. Positions 1277-1289 are enriched in basic and acidic residues; the sequence is SHREEQEGREGRG. C2H2-type zinc fingers lie at residues 1310-1335, 1362-1387, 1407-1432, 1444-1469, and 1549-1574; these read FHCI…RTVH, FACK…SDSH, FSCN…MEQH, IHCD…YYRH, and YPCM…KRTH. A Glycyl lysine isopeptide (Lys-Gly) (interchain with G-Cter in SUMO2) cross-link involves residue Lys-1423. Glycyl lysine isopeptide (Lys-Gly) (interchain with G-Cter in SUMO2) cross-links involve residues Lys-1599 and Lys-1611. A disordered region spans residues 1620 to 1654; it reads SERTEHSHSPGDSSAPIQNTDCCHSSERDGGQKGC. Positions 1629-1642 are enriched in polar residues; the sequence is PGDSSAPIQNTDCC. Lys-1696 is covalently cross-linked (Glycyl lysine isopeptide (Lys-Gly) (interchain with G-Cter in SUMO2)). The segment at 1725 to 1757 is disordered; sequence ESETRQHSSGQENTVKNPTHVPKENFRKHSQPR. The segment covering 1731-1741 has biased composition (polar residues); the sequence is HSSGQENTVKN. A Glycyl lysine isopeptide (Lys-Gly) (interchain with G-Cter in SUMO2) cross-link involves residue Lys-1762. A disordered region spans residues 1783-1807; sequence KEDDFDDWEPSEHLTLSNSSQSSND. Residues 1796-1807 show a composition bias toward polar residues; that stretch reads LTLSNSSQSSND.

The protein belongs to the krueppel C2H2-type zinc-finger protein family. As to quaternary structure, interacts with RIT1 and RIT2. Widely expressed in fetal and adult tissues.

The protein localises to the nucleus. May be involved in transcriptional regulation. The chain is Zinc finger protein Rlf (RLF) from Homo sapiens (Human).